Reading from the N-terminus, the 152-residue chain is Proteolipid protein 2 (152 aa).

One can recognise an MARVEL domain in the interval 19–138 (FSRTKKGILL…DAYITFPLKQ (120 aa)). The next 4 helical transmembrane spans lie at 25 to 45 (GILL…FSAS), 48 to 68 (SAYS…LVFY), 85 to 105 (DFFR…VVLV), and 112 to 132 (RVVA…DAYI).

It is found in the membrane. Its function is as follows. May play a role in cell differentiation in the intestinal epithelium. In Mus musculus (Mouse), this protein is Proteolipid protein 2 (Plp2).